The following is a 364-amino-acid chain: Ferrochelatase (364 aa).

2 residues coordinate Fe cation: H211 and E292.

It belongs to the ferrochelatase family.

It localises to the cytoplasm. The enzyme catalyses heme b + 2 H(+) = protoporphyrin IX + Fe(2+). Its pathway is porphyrin-containing compound metabolism; protoheme biosynthesis; protoheme from protoporphyrin-IX: step 1/1. In terms of biological role, catalyzes the ferrous insertion into protoporphyrin IX. The polypeptide is Ferrochelatase (Nitrosomonas europaea (strain ATCC 19718 / CIP 103999 / KCTC 2705 / NBRC 14298)).